The sequence spans 212 residues: Octanoyltransferase (212 aa).

Residues 31 to 209 (AETQDEIWLV…HFANLLGYNI (179 aa)) form the BPL/LPL catalytic domain. Substrate-binding positions include 70-77 (RGGQITYH), 138-140 (SLG), and 151-153 (GLA). Cys169 serves as the catalytic Acyl-thioester intermediate.

This sequence belongs to the LipB family.

The protein localises to the cytoplasm. The catalysed reaction is octanoyl-[ACP] + L-lysyl-[protein] = N(6)-octanoyl-L-lysyl-[protein] + holo-[ACP] + H(+). The protein operates within protein modification; protein lipoylation via endogenous pathway; protein N(6)-(lipoyl)lysine from octanoyl-[acyl-carrier-protein]: step 1/2. Its function is as follows. Catalyzes the transfer of endogenously produced octanoic acid from octanoyl-acyl-carrier-protein onto the lipoyl domains of lipoate-dependent enzymes. Lipoyl-ACP can also act as a substrate although octanoyl-ACP is likely to be the physiological substrate. This is Octanoyltransferase from Haemophilus influenzae (strain ATCC 51907 / DSM 11121 / KW20 / Rd).